A 270-amino-acid chain; its full sequence is 2-dehydro-3-deoxyphosphooctonate aldolase (270 aa).

It belongs to the KdsA family.

It is found in the cytoplasm. It carries out the reaction D-arabinose 5-phosphate + phosphoenolpyruvate + H2O = 3-deoxy-alpha-D-manno-2-octulosonate-8-phosphate + phosphate. It functions in the pathway carbohydrate biosynthesis; 3-deoxy-D-manno-octulosonate biosynthesis; 3-deoxy-D-manno-octulosonate from D-ribulose 5-phosphate: step 2/3. The protein operates within bacterial outer membrane biogenesis; lipopolysaccharide biosynthesis. The sequence is that of 2-dehydro-3-deoxyphosphooctonate aldolase from Helicobacter hepaticus (strain ATCC 51449 / 3B1).